Consider the following 229-residue polypeptide: Octanoyltransferase (229 aa).

Residues 30-223 (PDTPDTIWLV…QLQQRAQAHP (194 aa)) enclose the BPL/LPL catalytic domain. Substrate is bound by residues 69–76 (RGGQITYH), 141–143 (ALG), and 154–156 (GVS). Residue Cys-172 is the Acyl-thioester intermediate of the active site.

It belongs to the LipB family.

It is found in the cytoplasm. The catalysed reaction is octanoyl-[ACP] + L-lysyl-[protein] = N(6)-octanoyl-L-lysyl-[protein] + holo-[ACP] + H(+). Its pathway is protein modification; protein lipoylation via endogenous pathway; protein N(6)-(lipoyl)lysine from octanoyl-[acyl-carrier-protein]: step 1/2. In terms of biological role, catalyzes the transfer of endogenously produced octanoic acid from octanoyl-acyl-carrier-protein onto the lipoyl domains of lipoate-dependent enzymes. Lipoyl-ACP can also act as a substrate although octanoyl-ACP is likely to be the physiological substrate. This chain is Octanoyltransferase, found in Ralstonia pickettii (strain 12J).